We begin with the raw amino-acid sequence, 229 residues long: Ribonuclease HII (229 aa).

The 192-residue stretch at Gly-34 to Gln-225 folds into the RNase H type-2 domain. A divalent metal cation contacts are provided by Asp-40, Glu-41, and Asp-134.

This sequence belongs to the RNase HII family. It depends on Mn(2+) as a cofactor. Requires Mg(2+) as cofactor.

The protein resides in the cytoplasm. The catalysed reaction is Endonucleolytic cleavage to 5'-phosphomonoester.. In terms of biological role, endonuclease that specifically degrades the RNA of RNA-DNA hybrids. The protein is Ribonuclease HII of Corynebacterium diphtheriae (strain ATCC 700971 / NCTC 13129 / Biotype gravis).